A 1020-amino-acid chain; its full sequence is Probable leucine-rich repeat receptor-like serine/threonine-protein kinase At3g14840 (1020 aa).

The first 26 residues, 1-26, serve as a signal peptide directing secretion; the sequence is MSLNRQLLFTYYFIVSLILFSDFVSS. Residues 27–614 lie on the Extracellular side of the membrane; that stretch reads ATLPKEEVDA…GTGGGSSVGT (588 aa). N-linked (GlcNAc...) asparagine glycans are attached at residues N50 and N81. LRR repeat units lie at residues 86 to 110, 111 to 134, 136 to 157, 158 to 181, 182 to 204, 206 to 231, 253 to 276, 277 to 301, 302 to 324, and 326 to 349; these read ICHV…LSGL, PFLQ…WGAS, LLNI…LGNL, TTLS…LGNL, PNLK…TFAK, TTLT…NWKG, LGTL…PLRN, MTSM…LGQN, RKLK…TYSG, and SDVD…MVDQ. N-linked (GlcNAc...) asparagine glycans are attached at residues N124, N138, and N156. N193 carries an N-linked (GlcNAc...) asparagine glycan. 2 N-linked (GlcNAc...) asparagine glycosylation sites follow: N276 and N289. N359, N386, N389, N417, N461, N469, and N498 each carry an N-linked (GlcNAc...) asparagine glycan. The stretch at 479-501 is one LRR 11 repeat; it reads QARLSAISLTYQALCLGKGNYTV. A helical transmembrane segment spans residues 615 to 635; that stretch reads VVGSVIASTVFLVLLIGGILW. The Cytoplasmic portion of the chain corresponds to 636 to 1020; the sequence is WRGCLRPKSQ…LDSAYWNTRT (385 aa). The Protein kinase domain occupies 672 to 949; it reads FDPANKIGEG…VSMLEGHSTV (278 aa). Residues 678–686 and K700 each bind ATP; that span reads IGEGGFGPV. The residue at position 745 (Y745) is a Phosphotyrosine. D798 acts as the Proton acceptor in catalysis. S831 is subject to Phosphoserine. A phosphothreonine mark is found at T832 and T837. Y845 bears the Phosphotyrosine mark.

This sequence belongs to the protein kinase superfamily. Ser/Thr protein kinase family.

It localises to the cell membrane. It catalyses the reaction L-seryl-[protein] + ATP = O-phospho-L-seryl-[protein] + ADP + H(+). The enzyme catalyses L-threonyl-[protein] + ATP = O-phospho-L-threonyl-[protein] + ADP + H(+). The protein is Probable leucine-rich repeat receptor-like serine/threonine-protein kinase At3g14840 (LRR-RLK) of Arabidopsis thaliana (Mouse-ear cress).